The primary structure comprises 156 residues: Transcription elongation factor GreA (156 aa).

Positions 8–75 form a coiled coil; the sequence is LTKEGYEKLK…ELENMLSKAE (68 aa).

Belongs to the GreA/GreB family.

Necessary for efficient RNA polymerase transcription elongation past template-encoded arresting sites. The arresting sites in DNA have the property of trapping a certain fraction of elongating RNA polymerases that pass through, resulting in locked ternary complexes. Cleavage of the nascent transcript by cleavage factors such as GreA or GreB allows the resumption of elongation from the new 3'terminus. GreA releases sequences of 2 to 3 nucleotides. This chain is Transcription elongation factor GreA, found in Thermosipho melanesiensis (strain DSM 12029 / CIP 104789 / BI429).